The sequence spans 232 residues: Flagellar L-ring protein (232 aa).

The N-terminal stretch at M1–G15 is a signal peptide. Residue C16 is the site of N-palmitoyl cysteine attachment. Residue C16 is the site of S-diacylglycerol cysteine attachment.

The protein belongs to the FlgH family. In terms of assembly, the basal body constitutes a major portion of the flagellar organelle and consists of four rings (L,P,S, and M) mounted on a central rod.

The protein localises to the cell outer membrane. Its subcellular location is the bacterial flagellum basal body. Its function is as follows. Assembles around the rod to form the L-ring and probably protects the motor/basal body from shearing forces during rotation. The sequence is that of Flagellar L-ring protein from Campylobacter jejuni subsp. jejuni serotype O:6 (strain 81116 / NCTC 11828).